Consider the following 823-residue polypeptide: Sphingomyelin phosphodiesterase 4 (823 aa).

Ser130 and Ser245 each carry phosphoserine. The residue at position 665 (Thr665) is a Phosphothreonine. Ser749 is modified (phosphoserine). A helical transmembrane segment spans residues 776–796 (LLLLLMAFFVASLFCIGPLSC).

The cofactor is Mg(2+). As to expression, expressed in skeletal muscle (at protein level). In terms of tissue distribution, expressed in skeletal muscle but a lower levels than isoform 1 (at protein level).

The protein resides in the endoplasmic reticulum membrane. It is found in the golgi apparatus membrane. It localises to the nucleus envelope. Its subcellular location is the cell membrane. The protein localises to the sarcolemma. It catalyses the reaction a sphingomyelin + H2O = phosphocholine + an N-acylsphing-4-enine + H(+). Activated by phosphatidylserine and tumor necrosis factor (TNF). Inhibited by scyphostatin. Functionally, catalyzes the hydrolysis of membrane sphingomyelin to form phosphorylcholine and ceramide. It has a relevant role in the homeostasis of membrane sphingolipids, thereby influencing membrane integrity, and endoplasmic reticulum organization and function. May sensitize cells to DNA damage-induced apoptosis. In skeletal muscle, mediates TNF-stimulated oxidant production. This chain is Sphingomyelin phosphodiesterase 4 (Smpd4), found in Mus musculus (Mouse).